Consider the following 273-residue polypeptide: Probable ribosomal RNA small subunit methyltransferase A (273 aa).

S-adenosyl-L-methionine is bound by residues Asn23, Leu25, Gly50, Glu71, Asp95, and Asn110.

It belongs to the class I-like SAM-binding methyltransferase superfamily. rRNA adenine N(6)-methyltransferase family. RsmA subfamily.

The protein resides in the cytoplasm. In terms of biological role, specifically dimethylates two adjacent adenosines in the loop of a conserved hairpin near the 3'-end of 16S rRNA in the 30S particle. May play a critical role in biogenesis of 30S subunits. This is Probable ribosomal RNA small subunit methyltransferase A from Thermococcus sibiricus (strain DSM 12597 / MM 739).